Reading from the N-terminus, the 215-residue chain is 3-dehydroquinate dehydratase (215 aa).

Residues 27-29 (EVR) and R54 contribute to the 3-dehydroquinate site. H112 acts as the Proton donor/acceptor in catalysis. Catalysis depends on K139, which acts as the Schiff-base intermediate with substrate. Residues R176 and Q198 each coordinate 3-dehydroquinate.

Belongs to the type-I 3-dehydroquinase family. Homodimer.

The catalysed reaction is 3-dehydroquinate = 3-dehydroshikimate + H2O. It functions in the pathway metabolic intermediate biosynthesis; chorismate biosynthesis; chorismate from D-erythrose 4-phosphate and phosphoenolpyruvate: step 3/7. Involved in the third step of the chorismate pathway, which leads to the biosynthesis of aromatic amino acids. Catalyzes the cis-dehydration of 3-dehydroquinate (DHQ) and introduces the first double bond of the aromatic ring to yield 3-dehydroshikimate. The sequence is that of 3-dehydroquinate dehydratase from Thermococcus onnurineus (strain NA1).